The chain runs to 307 residues: Protease HtpX homolog 1 (307 aa).

A run of 2 helical transmembrane segments spans residues 7 to 27 and 38 to 60; these read LKTLMFLSGTLTIIAEGIITY and IFTAIFLVILWLIQWLIAPYLVG. H133 contacts Zn(2+). The active site involves E134. H137 serves as a coordination point for Zn(2+). Transmembrane regions (helical) follow at residues 145–165 and 180–200; these read IGMALGLIPTIIGYVGNFLLF and LILGLAMLAIGGVLFVLTFLL. E212 contacts Zn(2+).

Belongs to the peptidase M48B family. It depends on Zn(2+) as a cofactor.

The protein resides in the cell membrane. This chain is Protease HtpX homolog 1, found in Sulfolobus acidocaldarius (strain ATCC 33909 / DSM 639 / JCM 8929 / NBRC 15157 / NCIMB 11770).